Consider the following 438-residue polypeptide: tRNA-2-methylthio-N(6)-dimethylallyladenosine synthase (438 aa).

The 117-residue stretch at 4–120 (KKLYIDTVGC…VPEMVKDAEA (117 aa)) folds into the MTTase N-terminal domain. [4Fe-4S] cluster-binding residues include Cys13, Cys49, Cys83, Cys158, Cys162, and Cys165. The region spanning 144 to 377 (GRKRVSAFVT…QAVHSRIHNE (234 aa)) is the Radical SAM core domain. The 62-residue stretch at 377–438 (ETYVGSTQQV…YANSLLGELL (62 aa)) folds into the TRAM domain.

This sequence belongs to the methylthiotransferase family. MiaB subfamily. Monomer. The cofactor is [4Fe-4S] cluster.

It is found in the cytoplasm. The catalysed reaction is N(6)-dimethylallyladenosine(37) in tRNA + (sulfur carrier)-SH + AH2 + 2 S-adenosyl-L-methionine = 2-methylsulfanyl-N(6)-dimethylallyladenosine(37) in tRNA + (sulfur carrier)-H + 5'-deoxyadenosine + L-methionine + A + S-adenosyl-L-homocysteine + 2 H(+). In terms of biological role, catalyzes the methylthiolation of N6-(dimethylallyl)adenosine (i(6)A), leading to the formation of 2-methylthio-N6-(dimethylallyl)adenosine (ms(2)i(6)A) at position 37 in tRNAs that read codons beginning with uridine. This Trichlorobacter lovleyi (strain ATCC BAA-1151 / DSM 17278 / SZ) (Geobacter lovleyi) protein is tRNA-2-methylthio-N(6)-dimethylallyladenosine synthase.